A 161-amino-acid chain; its full sequence is Nucleotide-binding protein RC1_3464 (161 aa).

The protein belongs to the YajQ family.

Nucleotide-binding protein. This is Nucleotide-binding protein RC1_3464 from Rhodospirillum centenum (strain ATCC 51521 / SW).